The primary structure comprises 213 residues: Ras-like protein rasU (213 aa).

Gly21–Thr28 is a binding site for GTP. The short motif at Tyr43 to Tyr51 is the Effector region element. Residues Asp68–Gln72 and Asn126–Asp129 each bind GTP. The residue at position 210 (Cys210) is a Cysteine methyl ester. Residue Cys210 is the site of S-geranylgeranyl cysteine attachment. Residues Lys211–Ile213 constitute a propeptide, removed in mature form.

Belongs to the small GTPase superfamily. Ras family.

It localises to the cell membrane. It catalyses the reaction GTP + H2O = GDP + phosphate + H(+). Its function is as follows. Ras proteins bind GDP/GTP and possess intrinsic GTPase activity. The polypeptide is Ras-like protein rasU (rasU) (Dictyostelium discoideum (Social amoeba)).